Reading from the N-terminus, the 222-residue chain is Voltage-dependent calcium channel gamma-1 subunit (222 aa).

At 1-10 the chain is on the cytoplasmic side; that stretch reads MSPTEAPKVR. The helical transmembrane segment at 11-29 threads the bilayer; it reads VTLFCILVGIVLAMTAVVS. The Extracellular portion of the chain corresponds to 30 to 108; that stretch reads DHWAVLSPHM…TQKEYSISAA (79 aa). N-linked (GlcNAc...) asparagine glycosylation is found at Asn-43 and Asn-79. Cys-57 and Cys-80 are oxidised to a cystine. The chain crosses the membrane as a helical span at residues 109 to 129; sequence AISVFSLGFLIMGTICALMAF. Topologically, residues 130-134 are cytoplasmic; it reads RKKRD. A helical transmembrane segment spans residues 135–155; that stretch reads YLLRPASMFYVFAGLCLFVSL. Topologically, residues 156–179 are extracellular; it reads EVMRQSVKRMIDSEDTVWIEYYYS. The helical transmembrane segment at 180 to 204 threads the bilayer; that stretch reads WSFACACAAFVLLFLGGISLLLFSL. Over 205–222 the chain is Cytoplasmic; sequence PRMPQNPWESCMDAEPEH.

This sequence belongs to the PMP-22/EMP/MP20 family. CACNG subfamily. Component of a calcium channel complex consisting of a pore-forming alpha subunit (CACNA1S) and the ancillary subunits CACNB1 or CACNB2, CACNG1 and CACNA2D1. The channel complex contains alpha, beta, gamma and delta subunits in a 1:1:1:1 ratio, i.e. it contains either CACNB1 or CACNB2. Post-translationally, N-glycosylated. As to expression, skeletal muscle (at protein level).

It is found in the cell membrane. The protein localises to the sarcolemma. Its function is as follows. Regulatory subunit of the voltage-gated calcium channel that gives rise to L-type calcium currents in skeletal muscle. Regulates channel inactivation kinetics. The chain is Voltage-dependent calcium channel gamma-1 subunit (CACNG1) from Oryctolagus cuniculus (Rabbit).